The chain runs to 1176 residues: Leucine--tRNA ligase, cytoplasmic (1176 aa).

2 residues coordinate L-leucine: Tyr-52 and Tyr-54. The short motif at 60–63 (HLGH) is the 'HIGH' region element. A disordered region spans residues 115 to 142 (PDFPDEEDEEEETNVKTEDTRIKDKAKG). Acidic residues predominate over residues 117 to 126 (FPDEEDEEEE). Positions 127-139 (TNVKTEDTRIKDK) are enriched in basic and acidic residues. Ser-167 is modified (phosphoserine). The segment at 260 to 509 (GPQEYTLLKL…DAGDALIYME (250 aa)) is editing domain. L-leucine is bound by residues Leu-594 and Ser-597. Residues 716–720 (KMSKS) carry the 'KMSKS' region motif. Lys-719 is a binding site for ATP. Phosphoserine is present on Ser-720. N6-acetyllysine occurs at positions 970 and 1047.

The protein belongs to the class-I aminoacyl-tRNA synthetase family.

The protein localises to the cytoplasm. It catalyses the reaction tRNA(Leu) + L-leucine + ATP = L-leucyl-tRNA(Leu) + AMP + diphosphate. The enzyme catalyses L-methionyl-tRNA(Leu) + H2O = tRNA(Leu) + L-methionine + H(+). Its activity is regulated as follows. 5-fluoro-1,3-dihydro-1-hydroxy-1,2-benzoxaborole inhibits LARS1 by forming a covalent adduct with the 3' adenosine of tRNA(Leu) at the editing site, thus locking the enzyme in an inactive conformation. In terms of biological role, aminoacyl-tRNA synthetase that catalyzes the specific attachment of leucine to its cognate tRNA (tRNA(Leu)). It performs tRNA aminoacylation in a two-step reaction: Leu is initially activated by ATP to form a leucyl-adenylate (Leu-AMP) intermediate; then the leucyl moiety is transferred to the acceptor 3' end of the tRNA to yield leucyl-tRNA. To improve the fidelity of catalytic reactions, it is also able to hydrolyze misactivated aminoacyl-adenylate intermediates (pre-transfer editing) and mischarged aminoacyl-tRNAs (post-transfer editing). The sequence is that of Leucine--tRNA ligase, cytoplasmic (LARS1) from Pongo abelii (Sumatran orangutan).